We begin with the raw amino-acid sequence, 1503 residues long: Mitogen-activated protein kinase-binding protein 1 (1503 aa).

12 WD repeats span residues Ser89–Glu130, Glu133–Ser174, Lys176–Val214, Val271–Thr310, Ala337–Lys376, Tyr382–Ser431, Asp472–Lys511, Ala514–Gln556, Glu560–Gln601, Val609–Leu648, Gly654–Thr693, and Gly696–Met735. Disordered regions lie at residues Arg745 to Ala817, Leu874 to Thr917, and Val951 to Ser1176. The span at Lys784–Leu796 shows a compositional bias: acidic residues. 2 stretches are compositionally biased toward polar residues: residues Cys905–Thr917 and Asp957–Thr972. The segment covering Asp1028 to Gly1043 has biased composition (acidic residues). Positions Pro1058–Phe1068 are enriched in basic and acidic residues. A compositionally biased stretch (polar residues) spans Ser1089–Gly1129. Ser1193 carries the phosphoserine modification. Disordered regions lie at residues Gln1217–Asn1238 and Gln1369–Pro1391.

As to quaternary structure, can form homodimers (via C-terminus). Interacts (via C-terminus) with WDR62 (via C-terminus). Interacts with MAPK9. Interacts (via N-terminus) with NOD2; the interaction is enhanced in presence of muramyl dipeptide (MDP). Interacts with MAPK10. As to expression, ubiquitously expressed. Highest expression observed in brain.

It localises to the cytoplasm. Its subcellular location is the nucleus. It is found in the cytoskeleton. The protein localises to the spindle pole. Negative regulator of NOD2 function. It down-regulates NOD2-induced processes such as activation of NF-kappa-B signaling, IL8 secretion and antibacterial response. Involved in JNK signaling pathway. The chain is Mitogen-activated protein kinase-binding protein 1 (Mapkbp1) from Mus musculus (Mouse).